A 622-amino-acid chain; its full sequence is Polypeptide N-acetylgalactosaminyltransferase 6 (622 aa).

The Cytoplasmic portion of the chain corresponds to 1–8; sequence MRLLRRRH. The helical; Signal-anchor for type II membrane protein transmembrane segment at 9 to 28 threads the bilayer; sequence MSLRLAMLGSVFMLFLFIRQ. Topologically, residues 29–622 are lumenal; sequence KDVSNQEQAM…RDPYQLWLFV (594 aa). Residue Asn86 is glycosylated (N-linked (GlcNAc...) asparagine). A catalytic subdomain A region spans residues 176–285; the sequence is LPTTSVIIVF…HGWLEPLLAR (110 aa). Mn(2+) is bound by residues Asp269, His271, and His407. The interval 348–410 is catalytic subdomain B; it reads PIKSPTFAGG…PCSVVGHVFR (63 aa). The N-linked (GlcNAc...) asparagine glycan is linked to Asn476. In terms of domain architecture, Ricin B-type lectin spans 506–622; the sequence is TNQCLDVGEN…RDPYQLWLFV (117 aa). Cys509 and Cys527 form a disulfide bridge. Positions 511, 514, 528, and 533 each coordinate UDP-N-acetyl-alpha-D-galactosamine. 2 disulfides stabilise this stretch: Cys553–Cys566 and Cys597–Cys610.

The protein belongs to the glycosyltransferase 2 family. GalNAc-T subfamily. The cofactor is Mn(2+).

It localises to the golgi apparatus membrane. The enzyme catalyses L-seryl-[protein] + UDP-N-acetyl-alpha-D-galactosamine = a 3-O-[N-acetyl-alpha-D-galactosaminyl]-L-seryl-[protein] + UDP + H(+). The catalysed reaction is L-threonyl-[protein] + UDP-N-acetyl-alpha-D-galactosamine = a 3-O-[N-acetyl-alpha-D-galactosaminyl]-L-threonyl-[protein] + UDP + H(+). Its pathway is protein modification; protein glycosylation. Catalyzes the initial reaction in O-linked oligosaccharide biosynthesis, the transfer of an N-acetyl-D-galactosamine residue to a serine or threonine residue on the protein receptor. May participate in synthesis of oncofetal fibronectin. Has activity toward Muc1a, Muc2, EA2 and fibronectin peptides. This is Polypeptide N-acetylgalactosaminyltransferase 6 (Galnt6) from Mus musculus (Mouse).